Consider the following 280-residue polypeptide: Protoheme IX farnesyltransferase 2 (280 aa).

Helical transmembrane passes span 12 to 32, 35 to 55, 76 to 96, 98 to 118, 129 to 149, 158 to 178, 199 to 221, 226 to 248, and 255 to 275; these read VIWL…GGVD, LFSL…FNHY, LITP…GISL, FLLL…FYAV, WLNI…GYAL, AVLI…ALAF, ERAV…WLYL, GAGG…YAAV, and MWKM…ALMI.

This sequence belongs to the UbiA prenyltransferase family. Protoheme IX farnesyltransferase subfamily.

It localises to the cell membrane. The enzyme catalyses heme b + (2E,6E)-farnesyl diphosphate + H2O = Fe(II)-heme o + diphosphate. Its pathway is porphyrin-containing compound metabolism; heme O biosynthesis; heme O from protoheme: step 1/1. Its function is as follows. Converts heme B (protoheme IX) to heme O by substitution of the vinyl group on carbon 2 of heme B porphyrin ring with a hydroxyethyl farnesyl side group. This is Protoheme IX farnesyltransferase 2 from Pyrobaculum aerophilum (strain ATCC 51768 / DSM 7523 / JCM 9630 / CIP 104966 / NBRC 100827 / IM2).